Here is a 1244-residue protein sequence, read N- to C-terminus: Protein MMS22-like (1244 aa).

It belongs to the MMS22 family. MMS22L subfamily. As to quaternary structure, component of the MMS22L-TONSL complex, a complex at least composed of MMS22L and TONSL/NFKBIL2. Interacts with RAD51; interaction is direct. In terms of processing, degraded by the ubiquitin-proteasome system upon replication stress.

The protein resides in the nucleus. It localises to the chromosome. Component of the MMS22L-TONSL complex, a complex that promotes homologous recombination-mediated repair of double-strand breaks (DSBs) at stalled or collapsed replication forks. The MMS22L-TONSL complex is required to maintain genome integrity during DNA replication. It mediates the assembly of RAD51 filaments on single-stranded DNA (ssDNA): the MMS22L-TONSL complex is recruited to DSBs following histone replacement by histone chaperones and eviction of the replication protein A complex (RPA/RP-A) from DSBs. Following recruitment to DSBs, the TONSL-MMS22L complex promotes recruitment of RAD51 filaments and subsequent homologous recombination. Within the complex, MMS22L acts by binding ssDNA. The polypeptide is Protein MMS22-like (MMS22L) (Bos taurus (Bovine)).